A 552-amino-acid polypeptide reads, in one-letter code: MVLLISEIKDIAKRLTAAGDRKQYNSIIKLINELVIPENVTQLEEDETEKNLRFLVMSLFQIFRKLFSRGDLTLPSSKKSTLEKEQFVNWCRKVYEAFKTKLLAIISDIPFETSLGLDSLDVYLQLAELESTHFASEKGAPFFPNKTFRKLIIALWSSNMGEIEDVKSSGASENLIIVEFTEKYYTKFADIQYYFQSEFNQLLEDPAYQDLLLKNVGKWLALVNHDKHCSSVDADLEIFVPNPPQAIENESKFKSNFEKNWLSLLNGQLSLQQYKSILLILHKRIIPHFHTPTKLMDFLTDSYNLQSSNKNAGVVPILALNGLFELMKRFNLEYPNFYMKLYQIINPDLMHVKYRARFFRLMDVFLSSTHLSAHLVASFIKKLARLTLESPPSAIVTVIPFIYNLIRKHPNCMIMLHNPAFISNPFQTPDQVANLKTLKENYVDPFDVHESDPELTHALDSSLWELASLMEHYHPNVATLAKIFAQPFKKLSYNMEDFLDWNYDSLLNAESSRKLKTLPTLEFEAFTNVFDNEDGDSEASSQGNVYLPGVAW.

Belongs to the CBF/MAK21 family. In terms of assembly, interacts with NOP14 and MPP10. Interacts with snoRNA U3. Component of the ribosomal small subunit (SSU) processome composed of at least 40 protein subunits and snoRNA U3.

The protein resides in the nucleus. The protein localises to the nucleolus. Involved in nucleolar processing of pre-18S ribosomal RNA and ribosome assembly. Has a role in the nuclear export of 40S pre-ribosomal subunit to the cytoplasm. Its subcellular location and association with pre-40S subunit are unaffected by RPS19 disruptions, suggesting it acts before the ribosomal protein. The polypeptide is Nucleolar complex protein 4 (NOC4) (Saccharomyces cerevisiae (strain ATCC 204508 / S288c) (Baker's yeast)).